A 300-amino-acid chain; its full sequence is Protoheme IX farnesyltransferase (300 aa).

The next 9 membrane-spanning stretches (helical) occupy residues 20 to 40 (ITKA…YLLG), 49 to 69 (WSVL…SNAY), 97 to 117 (VTAL…LYTI), 122 to 142 (AMFA…LKTV), 145 to 165 (LSVF…WVAA), 176 to 196 (LFLI…WFLY), 217 to 237 (ALQV…PVLG), 242 to 262 (LFIS…MLFY), and 278 to 298 (LMLV…VDKF).

The protein belongs to the UbiA prenyltransferase family. Protoheme IX farnesyltransferase subfamily.

It localises to the cell inner membrane. It catalyses the reaction heme b + (2E,6E)-farnesyl diphosphate + H2O = Fe(II)-heme o + diphosphate. Its pathway is porphyrin-containing compound metabolism; heme O biosynthesis; heme O from protoheme: step 1/1. In terms of biological role, converts heme B (protoheme IX) to heme O by substitution of the vinyl group on carbon 2 of heme B porphyrin ring with a hydroxyethyl farnesyl side group. The polypeptide is Protoheme IX farnesyltransferase (Flavobacterium johnsoniae (strain ATCC 17061 / DSM 2064 / JCM 8514 / BCRC 14874 / CCUG 350202 / NBRC 14942 / NCIMB 11054 / UW101) (Cytophaga johnsonae)).